Here is a 153-residue protein sequence, read N- to C-terminus: 6,7-dimethyl-8-ribityllumazine synthase (153 aa).

5-amino-6-(D-ribitylamino)uracil contacts are provided by residues Phe22, 56–58 (AFE), and 80–82 (AVI). 85–86 (AT) is a (2S)-2-hydroxy-3-oxobutyl phosphate binding site. His88 serves as the catalytic Proton donor. Phe113 lines the 5-amino-6-(D-ribitylamino)uracil pocket. A (2S)-2-hydroxy-3-oxobutyl phosphate-binding site is contributed by Arg127.

Belongs to the DMRL synthase family.

The enzyme catalyses (2S)-2-hydroxy-3-oxobutyl phosphate + 5-amino-6-(D-ribitylamino)uracil = 6,7-dimethyl-8-(1-D-ribityl)lumazine + phosphate + 2 H2O + H(+). The protein operates within cofactor biosynthesis; riboflavin biosynthesis; riboflavin from 2-hydroxy-3-oxobutyl phosphate and 5-amino-6-(D-ribitylamino)uracil: step 1/2. In terms of biological role, catalyzes the formation of 6,7-dimethyl-8-ribityllumazine by condensation of 5-amino-6-(D-ribitylamino)uracil with 3,4-dihydroxy-2-butanone 4-phosphate. This is the penultimate step in the biosynthesis of riboflavin. This chain is 6,7-dimethyl-8-ribityllumazine synthase, found in Clostridium tetani (strain Massachusetts / E88).